We begin with the raw amino-acid sequence, 367 residues long: Histidinol-phosphate aminotransferase 1 (367 aa).

Lysine 229 is subject to N6-(pyridoxal phosphate)lysine.

Belongs to the class-II pyridoxal-phosphate-dependent aminotransferase family. Histidinol-phosphate aminotransferase subfamily. Homodimer. Pyridoxal 5'-phosphate is required as a cofactor.

The enzyme catalyses L-histidinol phosphate + 2-oxoglutarate = 3-(imidazol-4-yl)-2-oxopropyl phosphate + L-glutamate. It participates in amino-acid biosynthesis; L-histidine biosynthesis; L-histidine from 5-phospho-alpha-D-ribose 1-diphosphate: step 7/9. This chain is Histidinol-phosphate aminotransferase 1 (hisC1), found in Mesorhizobium japonicum (strain LMG 29417 / CECT 9101 / MAFF 303099) (Mesorhizobium loti (strain MAFF 303099)).